The sequence spans 440 residues: Ribulose bisphosphate carboxylase large chain (440 aa).

Lys4 carries the N6,N6,N6-trimethyllysine modification. The substrate site is built by Asn113 and Thr163. The Proton acceptor role is filled by Lys165. Lys167 provides a ligand contact to substrate. Mg(2+) contacts are provided by Lys191, Asp193, and Glu194. The residue at position 191 (Lys191) is an N6-carboxylysine. The active-site Proton acceptor is the His284. The substrate site is built by Arg285, His317, and Ser369.

This sequence belongs to the RuBisCO large chain family. Type I subfamily. As to quaternary structure, heterohexadecamer of 8 large chains and 8 small chains; disulfide-linked. The disulfide link is formed within the large subunit homodimers. Mg(2+) serves as cofactor. The disulfide bond which can form in the large chain dimeric partners within the hexadecamer appears to be associated with oxidative stress and protein turnover.

The protein resides in the plastid. It is found in the chloroplast. The catalysed reaction is 2 (2R)-3-phosphoglycerate + 2 H(+) = D-ribulose 1,5-bisphosphate + CO2 + H2O. The enzyme catalyses D-ribulose 1,5-bisphosphate + O2 = 2-phosphoglycolate + (2R)-3-phosphoglycerate + 2 H(+). Functionally, ruBisCO catalyzes two reactions: the carboxylation of D-ribulose 1,5-bisphosphate, the primary event in carbon dioxide fixation, as well as the oxidative fragmentation of the pentose substrate in the photorespiration process. Both reactions occur simultaneously and in competition at the same active site. In Onoclea sensibilis (Sensitive fern), this protein is Ribulose bisphosphate carboxylase large chain.